Reading from the N-terminus, the 341-residue chain is L-threonine 3-dehydrogenase (341 aa).

A Zn(2+)-binding site is contributed by Cys-38. Residues Thr-40 and His-43 each act as charge relay system in the active site. His-63, Glu-64, Cys-93, Cys-96, Cys-99, and Cys-107 together coordinate Zn(2+). Residues Ile-175, Asp-195, Arg-200, 262–264, and 286–287 contribute to the NAD(+) site; these read LGI and IY.

It belongs to the zinc-containing alcohol dehydrogenase family. Homotetramer. Zn(2+) serves as cofactor.

The protein resides in the cytoplasm. The enzyme catalyses L-threonine + NAD(+) = (2S)-2-amino-3-oxobutanoate + NADH + H(+). It participates in amino-acid degradation; L-threonine degradation via oxydo-reductase pathway; glycine from L-threonine: step 1/2. Its function is as follows. Catalyzes the NAD(+)-dependent oxidation of L-threonine to 2-amino-3-ketobutyrate. This is L-threonine 3-dehydrogenase from Pseudoalteromonas translucida (strain TAC 125).